A 559-amino-acid chain; its full sequence is 5'-AMP-activated protein kinase catalytic subunit alpha-1 (559 aa).

Residues 27–279 enclose the Protein kinase domain; that stretch reads YILGDTLGVG…IKDIREHEWF (253 aa). T32 carries the post-translational modification Phosphothreonine. ATP-binding positions include 33–41 and K56; that span reads LGVGTFGKV. D150 functions as the Proton acceptor in the catalytic mechanism. T183 carries the post-translational modification Phosphothreonine; by LKB1 and CaMKK2. Phosphothreonine is present on residues T269 and T355. An AIS region spans residues 302 to 381; that stretch reads EALKEVCEKF…PERVPFLVAE (80 aa). At S356 the chain carries Phosphoserine. S360 carries the post-translational modification Phosphoserine; by ULK1. Position 368 is a phosphothreonine; by ULK1 (T368). A Phosphothreonine modification is found at T382. Residue S397 is modified to Phosphoserine; by ULK1. Residues S467 and S486 each carry the phosphoserine modification. The tract at residues 484-536 is disordered; that stretch reads AKSGTATPQRSGSISNYRSCQRSDSDAEAQGKPSEVSLTSSVTSLDSSPVDVA. The segment covering 485–505 has biased composition (polar residues); sequence KSGTATPQRSGSISNYRSCQR. S486 is subject to Phosphoserine; by ULK1. Phosphothreonine; by ULK1 is present on T488. Phosphothreonine is present on T490. S496, S508, S524, and S527 each carry phosphoserine. Over residues 516–535 the composition is skewed to low complexity; sequence PSEVSLTSSVTSLDSSPVDV.

The protein belongs to the protein kinase superfamily. CAMK Ser/Thr protein kinase family. SNF1 subfamily. AMPK is a heterotrimer of an alpha catalytic subunit (PRKAA1 or PRKAA2), a beta (PRKAB1 or PRKAB2) and a gamma non-catalytic subunits (PRKAG1, PRKAG2 or PRKAG3). Interacts with FNIP1 and FNIP2. The cofactor is Mg(2+). Post-translationally, ubiquitinated. In terms of processing, phosphorylated at Thr-183 by STK11/LKB1 in complex with STE20-related adapter-alpha (STRADA) pseudo kinase and CAB39. Also phosphorylated at Thr-183 by CAMKK2; triggered by a rise in intracellular calcium ions, without detectable changes in the AMP/ATP ratio. CAMKK1 can also phosphorylate Thr-183, but at a much lower level. Dephosphorylated by protein phosphatase 2A and 2C (PP2A and PP2C). Phosphorylated by ULK1 and ULK2; leading to negatively regulate AMPK activity and suggesting the existence of a regulatory feedback loop between ULK1, ULK2 and AMPK. There is some ambiguity for some phosphosites: Ser-360/Thr-368 and Ser-486/Thr-488. Dephosphorylated by PPM1A and PPM1B. Glycosylated; O-GlcNAcylated by OGT, promoting the AMP-activated protein kinase (AMPK) activity. Low expression in kidney, liver, lung, heart and brain.

Its subcellular location is the cytoplasm. The protein localises to the nucleus. The catalysed reaction is L-seryl-[protein] + ATP = O-phospho-L-seryl-[protein] + ADP + H(+). The enzyme catalyses L-threonyl-[protein] + ATP = O-phospho-L-threonyl-[protein] + ADP + H(+). It catalyses the reaction L-seryl-[acetyl-CoA carboxylase] + ATP = O-phospho-L-seryl-[acetyl-CoA carboxylase] + ADP + H(+). It carries out the reaction L-seryl-[3-hydroxy-3-methylglutaryl-coenzyme A reductase] + ATP = O-phospho-L-seryl-[3-hydroxy-3-methylglutaryl-coenzyme A reductase] + ADP + H(+). The catalysed reaction is L-seryl-[tau protein] + ATP = O-phospho-L-seryl-[tau protein] + ADP + H(+). The enzyme catalyses L-threonyl-[tau protein] + ATP = O-phospho-L-threonyl-[tau protein] + ADP + H(+). Its activity is regulated as follows. Activated by phosphorylation on Thr-183. Binding of AMP to non-catalytic gamma subunit (PRKAG1, PRKAG2 or PRKAG3) results in allosteric activation, inducing phosphorylation on Thr-183. AMP-binding to gamma subunit also sustains activity by preventing dephosphorylation of Thr-183. ADP also stimulates Thr-183 phosphorylation, without stimulating already phosphorylated AMPK. ATP promotes dephosphorylation of Thr-183, rendering the enzyme inactive. Under physiological conditions AMPK mainly exists in its inactive form in complex with ATP, which is much more abundant than AMP. Selectively inhibited by compound C (6-[4-(2-Piperidin-1-yl-ethoxy)-phenyl)]-3-pyridin-4-yl-pyyrazolo[1,5-a] pyrimidine. Activated by resveratrol, a natural polyphenol present in red wine, and S17834, a synthetic polyphenol. Its function is as follows. Catalytic subunit of AMP-activated protein kinase (AMPK), an energy sensor protein kinase that plays a key role in regulating cellular energy metabolism. In response to reduction of intracellular ATP levels, AMPK activates energy-producing pathways and inhibits energy-consuming processes: inhibits protein, carbohydrate and lipid biosynthesis, as well as cell growth and proliferation. AMPK acts via direct phosphorylation of metabolic enzymes, and by longer-term effects via phosphorylation of transcription regulators. Regulates lipid synthesis by phosphorylating and inactivating lipid metabolic enzymes such as ACACA, ACACB, GYS1, HMGCR and LIPE; regulates fatty acid and cholesterol synthesis by phosphorylating acetyl-CoA carboxylase (ACACA and ACACB) and hormone-sensitive lipase (LIPE) enzymes, respectively. Promotes lipolysis of lipid droplets by mediating phosphorylation of isoform 1 of CHKA (CHKalpha2). Regulates insulin-signaling and glycolysis by phosphorylating IRS1, PFKFB2 and PFKFB3. AMPK stimulates glucose uptake in muscle by increasing the translocation of the glucose transporter SLC2A4/GLUT4 to the plasma membrane, possibly by mediating phosphorylation of TBC1D4/AS160. Regulates transcription and chromatin structure by phosphorylating transcription regulators involved in energy metabolism such as CRTC2/TORC2, FOXO3, histone H2B, HDAC5, MEF2C, MLXIPL/ChREBP, EP300, HNF4A, p53/TP53, SREBF1, SREBF2 and PPARGC1A. Acts as a key regulator of glucose homeostasis in liver by phosphorylating CRTC2/TORC2, leading to CRTC2/TORC2 sequestration in the cytoplasm. In response to stress, phosphorylates 'Ser-36' of histone H2B (H2BS36ph), leading to promote transcription. Acts as a key regulator of cell growth and proliferation by phosphorylating FNIP1, TSC2, RPTOR, WDR24 and ATG1/ULK1: in response to nutrient limitation, negatively regulates the mTORC1 complex by phosphorylating RPTOR component of the mTORC1 complex and by phosphorylating and activating TSC2. Also phosphorylates and inhibits GATOR2 subunit WDR24 in response to nutrient limitation, leading to suppress glucose-mediated mTORC1 activation. In response to energetic stress, phosphorylates FNIP1, inactivating the non-canonical mTORC1 signaling, thereby promoting nuclear translocation of TFEB and TFE3, and inducing transcription of lysosomal or autophagy genes. In response to nutrient limitation, promotes autophagy by phosphorylating and activating ATG1/ULK1. In that process, it also activates WDR45/WIPI4. Phosphorylates CASP6, thereby preventing its autoprocessing and subsequent activation. In response to nutrient limitation, phosphorylates transcription factor FOXO3 promoting FOXO3 mitochondrial import. Also acts as a regulator of cellular polarity by remodeling the actin cytoskeleton; probably by indirectly activating myosin. AMPK also acts as a regulator of circadian rhythm by mediating phosphorylation of CRY1, leading to destabilize it. May regulate the Wnt signaling pathway by phosphorylating CTNNB1, leading to stabilize it. Also has tau-protein kinase activity: in response to amyloid beta A4 protein (APP) exposure, activated by CAMKK2, leading to phosphorylation of MAPT/TAU; however the relevance of such data remains unclear in vivo. Also phosphorylates CFTR, EEF2K, KLC1, NOS3 and SLC12A1. Regulates hepatic lipogenesis. Activated via SIRT3, represses sterol regulatory element-binding protein (SREBP) transcriptional activities and ATP-consuming lipogenesis to restore cellular energy balance. Upon stress, regulates mitochondrial fragmentation through phosphorylation of MTFR1L. The chain is 5'-AMP-activated protein kinase catalytic subunit alpha-1 (Prkaa1) from Rattus norvegicus (Rat).